Here is a 471-residue protein sequence, read N- to C-terminus: UDP-N-acetylmuramoylalanine--D-glutamate ligase (471 aa).

122–128 lines the ATP pocket; it reads GSNAKST.

Belongs to the MurCDEF family.

Its subcellular location is the cytoplasm. It carries out the reaction UDP-N-acetyl-alpha-D-muramoyl-L-alanine + D-glutamate + ATP = UDP-N-acetyl-alpha-D-muramoyl-L-alanyl-D-glutamate + ADP + phosphate + H(+). It participates in cell wall biogenesis; peptidoglycan biosynthesis. Functionally, cell wall formation. Catalyzes the addition of glutamate to the nucleotide precursor UDP-N-acetylmuramoyl-L-alanine (UMA). The polypeptide is UDP-N-acetylmuramoylalanine--D-glutamate ligase (Psychrobacter cryohalolentis (strain ATCC BAA-1226 / DSM 17306 / VKM B-2378 / K5)).